We begin with the raw amino-acid sequence, 235 residues long: Small ribosomal subunit protein uS2 (235 aa).

Belongs to the universal ribosomal protein uS2 family.

This chain is Small ribosomal subunit protein uS2, found in Thermoanaerobacter pseudethanolicus (strain ATCC 33223 / 39E) (Clostridium thermohydrosulfuricum).